The sequence spans 225 residues: Riboflavin kinase (225 aa).

The interval 1–89 is unknown; the sequence is MPDIEYLKKL…SRIFSSEPDT (89 aa). Residues 90 to 225 are riboflavin kinase; it reads LELEGNVLKG…LKKQGMEGQK (136 aa). 99–104 contributes to the CDP binding site; it reads GLGEGQ. Residues threonine 128 and asparagine 130 each contribute to the Mg(2+) site. Positions 185 and 193 each coordinate FMN. Residue 198–201 coordinates CDP; that stretch reads VKLR.

The protein belongs to the archaeal riboflavin kinase family. Requires Mg(2+) as cofactor.

It carries out the reaction riboflavin + CTP = CDP + FMN + H(+). It participates in cofactor biosynthesis; FMN biosynthesis; FMN from riboflavin (CTP route): step 1/1. Catalyzes the CTP-dependent phosphorylation of riboflavin (vitamin B2) to form flavin mononucleotide (FMN). The protein is Riboflavin kinase (ribK) of Methanosarcina mazei (strain ATCC BAA-159 / DSM 3647 / Goe1 / Go1 / JCM 11833 / OCM 88) (Methanosarcina frisia).